The chain runs to 236 residues: Snake venom serine protease ussurin (236 aa).

The Peptidase S1 domain occupies 1-227; that stretch reads VIGGVECNIN…YTDWIQSIIS (227 aa). Cysteine 28 and cysteine 44 form a disulfide bridge. Residues histidine 43 and aspartate 88 each act as charge relay system in the active site. N-linked (GlcNAc...) asparagine glycosylation is found at asparagine 99 and asparagine 100. Disulfide bonds link cysteine 120–cysteine 188, cysteine 152–cysteine 167, and cysteine 178–cysteine 203. The active-site Charge relay system is the serine 182.

Belongs to the peptidase S1 family. Snake venom subfamily. In terms of assembly, monomer. In terms of tissue distribution, expressed by the venom gland.

It localises to the secreted. Its function is as follows. Snake venom serine protease that may act in the hemostasis system of the prey. The chain is Snake venom serine protease ussurin from Gloydius ussuriensis (Ussuri mamushi).